The following is a 60-amino-acid chain: uncharacterized protein (60 aa).

To E.coli YjeQ and H.influenzae HI_1714.

This is an uncharacterized protein from Azotobacter vinelandii.